The primary structure comprises 61 residues: Beta-defensin 133 (61 aa).

A signal peptide spans 1–23; that stretch reads MKIHVFLFVLFFFLVPIATRVKC. 2 cysteine pairs are disulfide-bonded: cysteine 31/cysteine 59 and cysteine 38/cysteine 52.

It belongs to the beta-defensin family.

It localises to the secreted. In terms of biological role, has antibacterial activity. This Homo sapiens (Human) protein is Beta-defensin 133 (DEFB133).